Here is a 421-residue protein sequence, read N- to C-terminus: Ethanolamine-phosphate cytidylyltransferase (421 aa).

Residues I8 to L28 form a helical membrane-spanning segment. A disordered region spans residues S203–A227. Residues R204–H215 are compositionally biased toward polar residues. Residues A262–F263, H270–I273, R298, H346–V349, and S377–I381 each bind CTP. Positions A402–D421 are disordered. The segment covering K403–E413 has biased composition (basic and acidic residues). S416 is subject to Phosphoserine.

The protein belongs to the cytidylyltransferase family. In terms of tissue distribution, expressed in root tip, lateral root primordia, leaves, shoot apex, stem vascular bundles, pollen and embryos.

Its subcellular location is the mitochondrion outer membrane. The catalysed reaction is phosphoethanolamine + CTP + H(+) = CDP-ethanolamine + diphosphate. It participates in phospholipid metabolism; phosphatidylethanolamine biosynthesis; phosphatidylethanolamine from ethanolamine: step 2/3. In terms of biological role, plays an important role in the biosynthesis of the phospholipid phosphatidylethanolamine. Catalyzes the formation of CDP-ethanolamine. Essential for early embryonic development. This chain is Ethanolamine-phosphate cytidylyltransferase, found in Arabidopsis thaliana (Mouse-ear cress).